A 342-amino-acid chain; its full sequence is Nicotinate-nucleotide--dimethylbenzimidazole phosphoribosyltransferase (342 aa).

The Proton acceptor role is filled by E311.

Belongs to the CobT family.

It catalyses the reaction 5,6-dimethylbenzimidazole + nicotinate beta-D-ribonucleotide = alpha-ribazole 5'-phosphate + nicotinate + H(+). It participates in nucleoside biosynthesis; alpha-ribazole biosynthesis; alpha-ribazole from 5,6-dimethylbenzimidazole: step 1/2. Its function is as follows. Catalyzes the synthesis of alpha-ribazole-5'-phosphate from nicotinate mononucleotide (NAMN) and 5,6-dimethylbenzimidazole (DMB). The polypeptide is Nicotinate-nucleotide--dimethylbenzimidazole phosphoribosyltransferase (Shewanella loihica (strain ATCC BAA-1088 / PV-4)).